The primary structure comprises 828 residues: Periplasmic nitrate reductase (828 aa).

The segment at residues 1-31 (MKLSRRHFMKANAVAAAAAVAGITIPIAVRA) is a signal peptide (tat-type signal). Positions 39-95 (IHWDKAPCRFCGVGCGVLVGTQNGRIVASQGDPEAPVNRGLNCIKGYFLPKIMYGQD) constitute a 4Fe-4S Mo/W bis-MGD-type domain. Cysteine 46, cysteine 49, cysteine 53, and cysteine 81 together coordinate [4Fe-4S] cluster. Residues lysine 83, glutamine 150, asparagine 175, cysteine 179, 212–219 (WGSNMAEM), 243–247 (STYQH), 262–264 (QTD), methionine 372, glutamine 376, asparagine 482, 508–509 (SD), lysine 531, aspartate 558, and 718–727 (TGRVLEHWHT) each bind Mo-bis(molybdopterin guanine dinucleotide). A substrate-binding site is contributed by phenylalanine 794. Residues asparagine 802 and lysine 819 each coordinate Mo-bis(molybdopterin guanine dinucleotide).

This sequence belongs to the prokaryotic molybdopterin-containing oxidoreductase family. NasA/NapA/NarB subfamily. As to quaternary structure, component of the periplasmic nitrate reductase NapAB complex composed of NapA and NapB. [4Fe-4S] cluster serves as cofactor. Mo-bis(molybdopterin guanine dinucleotide) is required as a cofactor. Predicted to be exported by the Tat system. The position of the signal peptide cleavage has not been experimentally proven.

Its subcellular location is the periplasm. It carries out the reaction 2 Fe(II)-[cytochrome] + nitrate + 2 H(+) = 2 Fe(III)-[cytochrome] + nitrite + H2O. In terms of biological role, catalytic subunit of the periplasmic nitrate reductase complex NapAB. Receives electrons from NapB and catalyzes the reduction of nitrate to nitrite. The chain is Periplasmic nitrate reductase from Pectobacterium atrosepticum (strain SCRI 1043 / ATCC BAA-672) (Erwinia carotovora subsp. atroseptica).